The sequence spans 94 residues: RNA-binding protein Hfq (94 aa).

Residues 9–68 enclose the Sm domain; it reads DPFLNALRRERVPVSIYLVNGIKLQGQVESFDQFVILLKNTVSQMVYKHAISTVVPARPF. Residues 70 to 94 form a disordered region; the sequence is VSAHHSSPAPTPAGGFNGQNDETSE.

The protein belongs to the Hfq family. Homohexamer.

RNA chaperone that binds small regulatory RNA (sRNAs) and mRNAs to facilitate mRNA translational regulation in response to envelope stress, environmental stress and changes in metabolite concentrations. Also binds with high specificity to tRNAs. The chain is RNA-binding protein Hfq from Shewanella woodyi (strain ATCC 51908 / MS32).